The following is a 389-amino-acid chain: (+)-bicyclogermacrene synthase TS4 (389 aa).

D136, E140, H284, G288, and D292 together coordinate Mg(2+). A DDxx(x)D/E motif motif is present at residues 136 to 140 (DEVCE). The NDxxSxxxD/E motif signature appears at 284 to 292 (HDFIGLQKD).

The protein belongs to the terpene synthase family.

It catalyses the reaction (2E,6E)-farnesyl diphosphate = bicyclogermacrene + diphosphate. In terms of biological role, catalyzes the cyclization of trans,trans-farnesyl diphosphate (FPP) to the bicyclic sesquiterpene bicyclogermacrene. The sequence is that of (+)-bicyclogermacrene synthase TS4 from Penicillium expansum (Blue mold rot fungus).